The primary structure comprises 945 residues: Kinesin-like protein CIN8 (945 aa).

The region spanning 22 to 409 (NITVAVRCRG…LEYAAKAKNI (388 aa)) is the Kinesin motor domain. Position 114–121 (114–121 (GMTSTGKT)) interacts with ATP. Residues 190–243 (IFDSSSMNHSSRASSQSNSPREPEVAHNGFSRRRQRPPPVKANRMSATKQQLSE) form a disordered region. A compositionally biased stretch (low complexity) spans 193–208 (SSSMNHSSRASSQSNS). Residues 234–243 (MSATKQQLSE) show a composition bias toward polar residues. Coiled-coil stretches lie at residues 450–562 (MSHE…DIKE) and 634–675 (LKEF…YLDQ).

The protein belongs to the TRAFAC class myosin-kinesin ATPase superfamily. Kinesin family. BimC subfamily.

It is found in the cytoplasm. Its subcellular location is the cytoskeleton. It localises to the spindle. In terms of biological role, elongates the mitotic spindle by interacting with spindle microtubules to generate an outward force pushing spindle poles apart. Following spindle assembly, CIN8 and KIP1 apparently act to oppose a force, possibly generated by KAR3, that draws separated poles back together. This Eremothecium gossypii (strain ATCC 10895 / CBS 109.51 / FGSC 9923 / NRRL Y-1056) (Yeast) protein is Kinesin-like protein CIN8 (CIN8).